Here is a 657-residue protein sequence, read N- to C-terminus: Histidine ammonia-lyase (657 aa).

Positions 253–255 (ASG) form a cross-link, 5-imidazolinone (Ala-Gly). Ser-254 carries the 2,3-didehydroalanine (Ser) modification. Thr-396 carries the phosphothreonine modification. Ser-635 carries the phosphoserine modification. Thr-637 bears the Phosphothreonine mark. Ser-648 is modified (phosphoserine).

The protein belongs to the PAL/histidase family. Post-translationally, contains an active site 4-methylidene-imidazol-5-one (MIO), which is formed autocatalytically by cyclization and dehydration of residues Ala-Ser-Gly.

The catalysed reaction is L-histidine = trans-urocanate + NH4(+). Its pathway is amino-acid degradation; L-histidine degradation into L-glutamate; N-formimidoyl-L-glutamate from L-histidine: step 1/3. The polypeptide is Histidine ammonia-lyase (HAL) (Homo sapiens (Human)).